Here is a 247-residue protein sequence, read N- to C-terminus: LHFPL tetraspan subfamily member 4 protein (247 aa).

Transmembrane regions (helical) follow at residues 22–42 (IGVLWAIFTICFAIINVVVFI), 97–117 (FFVLLSMVLILGCITCFSLFF), 127–147 (ICAWMQLLAALCLVLGCMIFP), and 178–198 (ILAIIGILNALILSFLAFVLG).

The protein belongs to the LHFP family. In terms of assembly, interacts with GABA(A) receptor subunits. Identified in a complex of 720 kDa composed of LHFPL4, NLGN2, GABRA1, GABRB2, GABRG2 and GABRB3. Interacts with GABRB3. Interacts with GABRA2. Interacts with GABRG2. Interacts with GABRA1. Interacts with NLGN2; leading to mutual regulation of protein level and synaptic clustering.

It is found in the cell projection. It localises to the dendrite. The protein resides in the postsynaptic cell membrane. Functionally, plays a role in the regulation of inhibitory synapse formation and function by being involved in maintening gamma-aminobutyric acid receptors (GABAARs) clustering and their associated scaffold proteins at inhibitory synaptic sites. Acts in concert with NLGN2 to recruit or stabilize GABAARs. In Homo sapiens (Human), this protein is LHFPL tetraspan subfamily member 4 protein.